Consider the following 498-residue polypeptide: Protein adenylyltransferase Fic (498 aa).

Residues 43 to 63 traverse the membrane as a helical segment; it reads FAFLAFLAGSFLAFSLHALIS. 2 TPR repeats span residues 126 to 159 and 160 to 194; these read ALSS…APRH and PEVL…NPSH. Residues 251-256 carry the Inhibitory (S/T)XXXE(G/N) motif motif; the sequence is SVGIEG. Residues Glu-255 and 336–339 each bind ATP; that span reads VGGH. Residues 305–440 enclose the Fido domain; it reads ITIKDILELH…IRPFVRFIAD (136 aa). His-383 is an active-site residue. ATP contacts are provided by residues 387–394, 419–420, and Asn-427; these read DGNGRTSR and YY.

This sequence belongs to the fic family. In terms of assembly, homodimer.

It localises to the membrane. The enzyme catalyses L-tyrosyl-[protein] + ATP = O-(5'-adenylyl)-L-tyrosyl-[protein] + diphosphate. The catalysed reaction is L-threonyl-[protein] + ATP = 3-O-(5'-adenylyl)-L-threonyl-[protein] + diphosphate. It carries out the reaction 3-O-(5'-adenylyl)-L-threonyl-[protein] + H2O = L-threonyl-[protein] + AMP + H(+). The side chain of Glu-255 determines which of the two opposing activities (AMPylase or de-AMPylase) will take place. In response to endoplasmic reticulum stress, mediates de-AMPylase activity. Adenylyltransferase activity is inhibited by the inhibitory helix present at the N-terminus: Glu-255 binds ATP and competes with ATP-binding at Arg-394, thereby preventing adenylyltransferase activity. In unstressed cells, disengagement of Glu-255 promotes adenylyltransferase activity. Activation dissociates ATP-binding from Glu-255, allowing ordered binding of the entire ATP moiety with the alpha-phosphate in an orientation that is productive for accepting an incoming target hydroxyl side chain. In terms of biological role, protein that can both mediate the addition of adenosine 5'-monophosphate (AMP) to specific residues of target proteins (AMPylation), and the removal of the same modification from target proteins (de-AMPylation), depending on the context. The side chain of Glu-255 determines which of the two opposing activities (AMPylase or de-AMPylase) will take place. Acts as a key regulator of the unfolded protein response (UPR) by mediating AMPylation or de-AMPylation of Hsc70-3/BiP. In unstressed cells, acts as an adenylyltransferase by mediating AMPylation of Hsc70-3/BiP at 'Thr-518', thereby inactivating it. In response to endoplasmic reticulum stress, acts as a phosphodiesterase by mediating removal of ATP (de-AMPylation) from Hsc70-3/BiP at 'Thr-518', leading to restore HSPA5/BiP activity. This Drosophila willistoni (Fruit fly) protein is Protein adenylyltransferase Fic.